A 555-amino-acid chain; its full sequence is Hydroxylamine reductase (555 aa).

Cys5, Cys8, Cys17, and Cys23 together coordinate [4Fe-4S] cluster. Hybrid [4Fe-2O-2S] cluster contacts are provided by His248, Glu272, Cys316, Cys408, Cys436, Cys461, Glu496, and Lys498. Cys408 is modified (cysteine persulfide).

Belongs to the HCP family. [4Fe-4S] cluster serves as cofactor. The cofactor is hybrid [4Fe-2O-2S] cluster.

The protein resides in the cytoplasm. It carries out the reaction A + NH4(+) + H2O = hydroxylamine + AH2 + H(+). In terms of biological role, catalyzes the reduction of hydroxylamine to form NH(3) and H(2)O. This is Hydroxylamine reductase from Halothermothrix orenii (strain H 168 / OCM 544 / DSM 9562).